The following is a 557-amino-acid chain: Selenoprotein N (557 aa).

Positions 1 to 24 (MGQARPAARRPHSPDPGAQPAPPR) are disordered. A signal peptide spans 1-42 (MGQARPAARRPHSPDPGAQPAPPRRRARALALLGALLAAAAA). Residues 67–102 (VLGTDGLFLFSSLDTDQDMYISPEEFKPIAEKLTGS) form the EF-hand domain. An N-linked (GlcNAc...) asparagine glycan is attached at asparagine 156. Position 428 (selenocysteine 428) is a non-standard amino acid, selenocysteine. Asparagine 449 and asparagine 497 each carry an N-linked (GlcNAc...) asparagine glycan.

As to quaternary structure, interacts with RYR1, RYR2 and RYR3. N-glycosylated.

Its subcellular location is the endoplasmic reticulum membrane. Its function is as follows. Plays an important role in cell protection against oxidative stress and in the regulation of redox-related calcium homeostasis. Regulates the calcium level of the ER by protecting the calcium pump ATP2A2 against the oxidoreductase ERO1A-mediated oxidative damage. Within the ER, ERO1A activity increases the concentration of H(2)O(2), which attacks the luminal thiols in ATP2A2 and thus leads to cysteinyl sulfenic acid formation (-SOH) and SEPN1 reduces the SOH back to free thiol (-SH), thus restoring ATP2A2 activity. Acts as a modulator of ryanodine receptor (RyR) activity: protects RyR from oxidation due to increased oxidative stress, or directly controls the RyR redox state, regulating the RyR-mediated calcium mobilization required for normal muscle development and differentiation. Essential for muscle regeneration and satellite cell maintenance in skeletal muscle. The polypeptide is Selenoprotein N (Mus musculus (Mouse)).